The primary structure comprises 377 residues: MVDTSKIKALKEKSRRTVKSGSLKFILIILVVVIVGLLAFIAYNEISNLQFQEKITLENQKKAAIESINQMFAKYPNDPQKLIYINKIQMANNIEEINEVLEEAKKYISFKNYKIEAINQIKSMYGEYYSLSLSAQELVHKISLAQSTEEIENLLKSVDIEKDIRSIIEKQIDYVLASGDKYYYVEINGKSMFMTRDEILKYKKFWTLSELKSLKITPVSQLNKVAIEISAKQCGKLPHKGDIISIYSKDGSFITYGIIDSSYVILSSISYSESKSTSSNINELGESYSSSSSSSISYSLNNLPGILHATVIDRLDYDKIKKMFGEYGKKLNEIEDDTQIFDENVNYFLIISIPDDKIPDIIQIDPKDIVIVIKSKE.

Helical transmembrane passes span 23-43 and 251-271; these read LKFI…FIAY and GSFI…SISY.

Its subcellular location is the cell membrane. This is an uncharacterized protein from Methanocaldococcus jannaschii (strain ATCC 43067 / DSM 2661 / JAL-1 / JCM 10045 / NBRC 100440) (Methanococcus jannaschii).